The chain runs to 138 residues: Secreted RxLR effector protein 91 (138 aa).

The first 18 residues, 1-18 (MVIPHIICLPMALHLWTC), serve as a signal peptide directing secretion. The RxLR motif lies at 34-37 (RRLR). N-linked (GlcNAc...) asparagine glycosylation occurs at Asn93.

It belongs to the RxLR effector family.

It is found in the secreted. The protein localises to the host nucleus. Secreted effector that completely suppresses the host cell death induced by cell death-inducing proteins. In Plasmopara viticola (Downy mildew of grapevine), this protein is Secreted RxLR effector protein 91.